Reading from the N-terminus, the 441-residue chain is Ribulose bisphosphate carboxylase large chain (441 aa).

Residue Lys-5 is modified to N6,N6,N6-trimethyllysine. Residues Asn-114 and Thr-164 each coordinate substrate. Lys-166 (proton acceptor) is an active-site residue. Lys-168 serves as a coordination point for substrate. 3 residues coordinate Mg(2+): Lys-192, Asp-194, and Glu-195. The residue at position 192 (Lys-192) is an N6-carboxylysine. The active-site Proton acceptor is the His-285. Substrate-binding residues include Arg-286, His-318, and Ser-370.

This sequence belongs to the RuBisCO large chain family. Type I subfamily. Heterohexadecamer of 8 large chains and 8 small chains; disulfide-linked. The disulfide link is formed within the large subunit homodimers. It depends on Mg(2+) as a cofactor. The disulfide bond which can form in the large chain dimeric partners within the hexadecamer appears to be associated with oxidative stress and protein turnover.

The protein resides in the plastid. The protein localises to the chloroplast. The catalysed reaction is 2 (2R)-3-phosphoglycerate + 2 H(+) = D-ribulose 1,5-bisphosphate + CO2 + H2O. The enzyme catalyses D-ribulose 1,5-bisphosphate + O2 = 2-phosphoglycolate + (2R)-3-phosphoglycerate + 2 H(+). RuBisCO catalyzes two reactions: the carboxylation of D-ribulose 1,5-bisphosphate, the primary event in carbon dioxide fixation, as well as the oxidative fragmentation of the pentose substrate in the photorespiration process. Both reactions occur simultaneously and in competition at the same active site. In Drosera dichrosepala (Rusty sundew), this protein is Ribulose bisphosphate carboxylase large chain.